A 348-amino-acid chain; its full sequence is Rhodopsin (348 aa).

Methionine 1 is subject to N-acetylmethionine. Over 1-36 (MNGTEGPNFYVPFSNKTGVVRSPFEYPQYYLAEPWQ) the chain is Extracellular. Asparagine 2 and asparagine 15 each carry an N-linked (GlcNAc...) asparagine glycan. Residues 37–61 (FSMLAAYMFLLIVLGFPINFLTLYV) form a helical membrane-spanning segment. Residues 62–73 (TVQHKNVRTPLN) are Cytoplasmic-facing. A helical membrane pass occupies residues 74–96 (YILLNLAVANHFMVFGGFTTTLY). Topologically, residues 97–110 (TSLHGYFVFGSTGC) are extracellular. Residues cysteine 110 and cysteine 187 are joined by a disulfide bond. A helical transmembrane segment spans residues 111-133 (NLEGFFATLGGEIALWSLVVLAI). The 'Ionic lock' involved in activated form stabilization signature appears at 134 to 136 (ERY). At 134 to 152 (ERYVVVCKPMSNFRFGENH) the chain is on the cytoplasmic side. Residues 153-173 (AIMGVAFTWVMALACAAPPLV) form a helical membrane-spanning segment. Residues 174–202 (GWSRYIPEGMQCSCGIDYYTLKPEVNNES) lie on the Extracellular side of the membrane. Glutamate 201 contacts Zn(2+). A helical membrane pass occupies residues 203 to 224 (FVIYMFVVHFTIPMTIIFFCYG). Over 225-252 (QLVFTVKEAAAQQQESATTQKAEKEVTR) the chain is Cytoplasmic. A helical transmembrane segment spans residues 253-274 (MVIIMVIAFLICWVPYASVAFY). The Extracellular portion of the chain corresponds to 275 to 286 (IFTHQGSDFGPI). Glutamine 279 contributes to the Zn(2+) binding site. A helical transmembrane segment spans residues 287–308 (LMTLPAFFAKSSAIYNPVIYIM). An N6-(retinylidene)lysine modification is found at lysine 296. The Cytoplasmic portion of the chain corresponds to 309-348 (MNKQFRNCMLTTICCGKNPFGEEEGSTTASKTETSQVAPA). 2 S-palmitoyl cysteine lipidation sites follow: cysteine 322 and cysteine 323. The tract at residues 330–348 (EEEGSTTASKTETSQVAPA) is interaction with SAG. At serine 334 the chain carries Phosphoserine. Threonine 335 and threonine 336 each carry phosphothreonine. Serine 338 is modified (phosphoserine). A phosphothreonine mark is found at threonine 340 and threonine 342. A Phosphoserine modification is found at serine 343.

It belongs to the G-protein coupled receptor 1 family. Opsin subfamily. In terms of assembly, homodimer. May form a complex composed of RHO, GRK1 and RCVRN in a Ca(2+)-dependent manner; RCVRN prevents the interaction between GRK1 and RHO. Interacts with GRK1. Interacts (phosphorylated form) with SAG. Interacts with GNAT1. Interacts with GNAT3. SAG and G-proteins compete for a common binding site. Interacts with PRCD; the interaction promotes PRCD stability. Forms a complex with ASAP1 and ARF4. Forms a complex with ASAP1, RAB11A, Rabin8/RAB3IP, ARF4 and RAB11FIP3; the complex regulates Golgi-to-cilia rhodopsin/RHO transport in photoreceptors. In terms of processing, phosphorylated on some or all of the serine and threonine residues present in the C-terminal region. Post-translationally, contains one covalently linked retinal chromophore. Upon light absorption, the covalently bound 11-cis-retinal is converted to all-trans-retinal. After hydrolysis of the Schiff base and release of the covalently bound all-trans-retinal, active rhodopsin is regenerated by binding of a fresh molecule of 11-cis-retinal.

It is found in the membrane. The protein resides in the cell projection. The protein localises to the cilium. It localises to the photoreceptor outer segment. Its function is as follows. Photoreceptor required for image-forming vision at low light intensity. Required for photoreceptor cell viability after birth. Light-induced isomerization of 11-cis to all-trans retinal triggers a conformational change that activates signaling via G-proteins. Subsequent receptor phosphorylation mediates displacement of the bound G-protein alpha subunit by the arrestin SAG and terminates signaling. This Loxodonta africana (African elephant) protein is Rhodopsin (RHO).